Reading from the N-terminus, the 144-residue chain is Protein archease (144 aa).

Residues Asp14, Asp143, and Ile144 each contribute to the Ca(2+) site.

This sequence belongs to the archease family.

Functionally, activates the tRNA-splicing ligase complex by facilitating the enzymatic turnover of catalytic subunit RtcB. Acts by promoting the guanylylation of RtcB, a key intermediate step in tRNA ligation. Can also alter the NTP specificity of RtcB such that ATP, dGTP or ITP is used efficiently. The sequence is that of Protein archease from Aeropyrum pernix (strain ATCC 700893 / DSM 11879 / JCM 9820 / NBRC 100138 / K1).